Consider the following 91-residue polypeptide: Large ribosomal subunit protein uL22 (91 aa).

Belongs to the universal ribosomal protein uL22 family. In terms of assembly, part of the 50S ribosomal subunit.

In terms of biological role, this protein binds specifically to 23S rRNA; its binding is stimulated by other ribosomal proteins, e.g. L4, L17, and L20. It is important during the early stages of 50S assembly. It makes multiple contacts with different domains of the 23S rRNA in the assembled 50S subunit and ribosome. The globular domain of the protein is located near the polypeptide exit tunnel on the outside of the subunit, while an extended beta-hairpin is found that lines the wall of the exit tunnel in the center of the 70S ribosome. In Pigeon pea witches'-broom phytoplasma, this protein is Large ribosomal subunit protein uL22 (rplV).